Consider the following 1038-residue polypeptide: GTPase-activating Rap/Ran-GAP domain-like protein 3 (1038 aa).

A phosphoserine mark is found at Lys6 and Ser68. The region spanning 214–430 (LLVLEEQEGS…RTLDMLIRSL (217 aa)) is the Rap-GAP domain. Phosphoserine is present on residues Ser449 and Ser455. The CNH domain maps to 512–824 (PHEAVCADPW…QLVASRSDIY (313 aa)). 2 disordered regions span residues 833-863 (EGSSGGSSKGASAHTSPQTPPARDTPLFPSS) and 937-1038 (LLGL…IDLK). At Thr851 the chain carries Phosphothreonine. A compositionally biased stretch (polar residues) spans 1019 to 1028 (SGSSPFQLMA).

This sequence belongs to the GARNL3 family.

This is GTPase-activating Rap/Ran-GAP domain-like protein 3 (Garnl3) from Mus musculus (Mouse).